The primary structure comprises 238 residues: Ribonuclease M (238 aa).

5 cysteine pairs are disulfide-bonded: Cys-5-Cys-22, Cys-13-Cys-58, Cys-21-Cys-126, Cys-66-Cys-118, and Cys-191-Cys-225. His-51 is an active-site residue. An N-linked (GlcNAc...) asparagine glycan is attached at Asn-74. Active-site residues include Glu-111 and His-115.

Belongs to the RNase T2 family.

The enzyme catalyses a ribonucleotidyl-ribonucleotide-RNA + H2O = a 3'-end 3'-phospho-ribonucleotide-RNA + a 5'-end dephospho-ribonucleoside-RNA + H(+). This is a base non-specific and adenylic acid preferential ribonuclease. The sequence is that of Ribonuclease M from Aspergillus phoenicis (Aspergillus saitoi).